A 1262-amino-acid polypeptide reads, in one-letter code: Cytoplasmic FMR1-interacting protein homolog (1262 aa).

Residues 519 to 550 form a disordered region; sequence LNRMTDVKGKKKSSAPKGDSANSSSSDIRIPR.

Belongs to the CYFIP family. As to quaternary structure, interacts with gex-3.

Its subcellular location is the cytoplasm. In terms of biological role, required for initial steps of body morphogenesis. May play a role in egg laying and yolk protein clatherin-mediated endocytosis by oocytes during oogenesis. Plays a role in the formation of muscle connections, also called muscle arm extensions, between the body wall and the motor axons in the dorsal and ventral cord. The chain is Cytoplasmic FMR1-interacting protein homolog from Caenorhabditis elegans.